Reading from the N-terminus, the 1077-residue chain is Receptor-like protein 1 (1077 aa).

A signal peptide spans 1–38 (MRTDERRRWWVKPKKHITLVFITITMIIQFQMKGCVSC). Residues 39-120 (VETERMGLLQ…SQTRSLNLSL (82 aa)) are N-cap. The Extracellular portion of the chain corresponds to 39–1024 (VETERMGLLQ…NEEEGNVIDM (986 aa)). Asn-117, Asn-131, and Asn-139 each carry an N-linked (GlcNAc...) asparagine glycan. LRR repeat units follow at residues 124–147 (FPQL…FLGF), 153–176 (LDKL…FLNA), 177–201 (ATSI…ELSN), 202–225 (MTNL…GLTD), 227–250 (RDLE…SLST), 251–274 (AKLK…GLES), 275–299 (LQEL…VLKD), 300–324 (LKML…GLEI), 326–348 (TSLQ…YLGI), 351–376 (LMKL…NLTH), 378–397 (RTLD…FVSG), and 399–424 (PSVL…LVNQ). A glycan (N-linked (GlcNAc...) asparagine) is linked at Asn-201. A glycan (N-linked (GlcNAc...) asparagine) is linked at Asn-240. A glycan (N-linked (GlcNAc...) asparagine) is linked at Asn-289. N-linked (GlcNAc...) asparagine glycosylation is found at Asn-373, Asn-390, and Asn-423. An LRR 13; degenerate repeat occupies 425-449 (TRLTVFKLSSKVGVIQVQTESSWAP). 19 LRR repeats span residues 450–473 (LFQL…FLVH), 474–498 (QRDL…LVKN), 499–522 (NTRL…ILVH), 524–545 (LQVL…IGMV), 546–570 (FPNL…IGEM), 572–594 (SLQV…FLSG), 595–621 (CYSL…NLTG), 623–643 (VGLF…LLKS), 644–666 (KNLT…WIGR), 667–694 (ISRL…PWVE), 696–713 (MDIS…NVNF), 714–737 (PSLR…LFKA), 739–761 (GLEV…IDQT), 762–785 (SKLR…ICQL), 786–808 (SEVG…CFSK), 877–901 (LRYM…IGDL), 902–925 (QNIR…ISKL), 927–949 (GLES…LADL), and 951–970 (SLGY…PFKG). N-linked (GlcNAc...) asparagine glycans are attached at residues Asn-460 and Asn-498. The N-linked (GlcNAc...) asparagine glycan is linked to Asn-553. N-linked (GlcNAc...) asparagine glycosylation is found at Asn-618, Asn-631, and Asn-645. Asn-749 and Asn-771 each carry an N-linked (GlcNAc...) asparagine glycan. The N-linked (GlcNAc...) asparagine glycan is linked to Asn-908. N-linked (GlcNAc...) asparagine glycans are attached at residues Asn-956 and Asn-961. The C-cap/acidic domain stretch occupies residues 971–1024 (HLVTFDERSYIGNAHLCGLPTNKNCISQRVPEPPSVSTHAKEEENEEEGNVIDM). A helical membrane pass occupies residues 1025-1045 (VWFYWTCAAVYISTSLALFAF). Over 1046–1077 (LYIDSRWSREWFYRVDLCVHHILQFKRSSVCN) the chain is Cytoplasmic.

The protein belongs to the RLP family.

Its subcellular location is the cell membrane. Its function is as follows. Involved in plant defense. Confers resistance to the bacterial pathogen Xanthomonas through recognition of the microbe-associated molecular pattern (MAMP) eMax. Functionality seems to depend on the presence of the receptor kinase SOBIR1 as an adapter protein. The chain is Receptor-like protein 1 from Arabidopsis thaliana (Mouse-ear cress).